A 648-amino-acid chain; its full sequence is Forkhead box protein N1 (648 aa).

The interval 1–95 is disordered; sequence MVSLLPPQSD…PGPGSFRLSP (95 aa). Residues 38-50 are compositionally biased toward polar residues; that stretch reads APQNKHANFSCSS. A compositionally biased stretch (pro residues) spans 54-67; it reads DGPPERTPSLPPHS. The fork-head DNA-binding region spans 271 to 367; the sequence is KPIYSYSILI…EELQKWKRKD (97 aa). 3 disordered regions span residues 392–432, 457–521, and 629–648; these read LGSP…APGP, HLSP…TLLP, and SAAA…LALA. Residues 398–412 show a composition bias toward pro residues; that stretch reads GCPPPGLAGPGPIRP.

Bone marrow (at protein level). Expressed in thymus and skin.

It is found in the nucleus. Transcriptional regulator which regulates the development, differentiation, and function of thymic epithelial cells (TECs) both in the prenatal and postnatal thymus. Acts as a master regulator of the TECs lineage development and is required from the onset of differentiation in progenitor TECs in the developing fetus to the final differentiation steps through which TECs mature to acquire their full functionality. Regulates, either directly or indirectly the expression of a variety of genes that mediate diverse aspects of thymus development and function, including MHC Class II, DLL4, CCL25, CTSL, CD40 and PAX1. Regulates the differentiation of the immature TECs into functional cortical TECs (cTECs) and medullary TECs (mTECs). Essential for maintenance of mTECs population in the postnatal thymus. Involved in the morphogenesis and maintenance of the three-dimensional thymic microstructure which is necessary for a fully functional thymus. Plays an important role in the maintenance of hematopoiesis and particularly T lineage progenitors within the bone marrow niche with age. Essential for the vascularization of the thymus anlage. Promotes the terminal differentiation of epithelial cells in the epidermis and hair follicles, partly by negatively regulating the activity of protein kinase C. This chain is Forkhead box protein N1 (Foxn1), found in Mus musculus (Mouse).